The chain runs to 89 residues: Large ribosomal subunit protein bL27 (89 aa).

A disordered region spans residues 1–22; it reads MAQKKAGGSSRNGRDSAGRRLG.

The protein belongs to the bacterial ribosomal protein bL27 family.

The polypeptide is Large ribosomal subunit protein bL27 (Gluconacetobacter diazotrophicus (strain ATCC 49037 / DSM 5601 / CCUG 37298 / CIP 103539 / LMG 7603 / PAl5)).